Here is a 328-residue protein sequence, read N- to C-terminus: CCAAT/enhancer-binding protein beta (328 aa).

Position 3 is an asymmetric dimethylarginine; by CARM1 (R3). The residue at position 39 (K39) is an N6-methylated lysine. Positions 165–274 (DSCKGPRKEE…NIAVRKSRDK (110 aa)) are disordered. Residues 200–231 (SVPSGSSGNLSTSSSSSPPGTPNPSESSKSAA) are compositionally biased toward low complexity. Residue T220 is modified to Phosphothreonine; by RPS6KA1, CDK2 and MAPK. Positions 248 to 264 (KCVDKHSDEYKLRRERN) are enriched in basic and acidic residues. In terms of domain architecture, bZIP spans 254-317 (SDEYKLRRER…STLRNLFKQL (64 aa)). Positions 258–278 (KLRRERNNIAVRKSRDKAKMR) are basic motif. Residues 280–287 (LETQHKVL) form a leucine-zipper region.

This sequence belongs to the bZIP family. C/EBP subfamily. As to quaternary structure, binds DNA as a dimer. Interacts (not methylated) with MED23, MED26, SMARCA2, SMARCB1 and SMARCC1. Post-translationally, methylated. Methylation at Arg-3 by CARM1 and at Lys-39 by EHMT2, inhibit transactivation activity. Methylation is probably inhibited by phosphorylation at Thr-220. Specifically expressed in myelomoncytic cells.

The protein localises to the nucleus. Functionally, important transcriptional activator regulating the expression of genes involved in immune and inflammatory responses. Binds to regulatory regions of several acute-phase and cytokines genes and probably plays a role in the regulation of acute-phase reaction, inflammation and hemopoiesis. The consensus recognition site is 5'-T[TG]NNGNAA[TG]-3'. Functions in brown adipose tissue (BAT) differentiation. Regulates the transcriptional induction of peroxisome proliferator-activated receptor gamma (PPARG). Binds to the MGF and MIM-1 promoters and activates the transcription of these genes. Its function is as follows. Important transcription factor regulating the expression of genes involved in immune and inflammatory responses. Also plays a significant role in adipogenesis, as well as in the gluconeogenic pathway, liver regeneration, and hematopoiesis. The consensus recognition site is 5'-T[TG]NNGNAA[TG]-3'. Its functional capacity is governed by protein interactions and post-translational protein modifications. This is CCAAT/enhancer-binding protein beta (CEBPB) from Gallus gallus (Chicken).